Reading from the N-terminus, the 478-residue chain is Zinc metalloproteinase/disintegrin (478 aa).

Residues 1 to 20 (MIEVLLVTICLAAFPYQGSS) form the signal peptide. The propeptide occupies 21–187 (IILESGNVND…PIKKASQSNL (167 aa)). 3 cysteine pairs are disulfide-bonded: cysteine 304–cysteine 384, cysteine 344–cysteine 368, and cysteine 346–cysteine 351. Histidine 329 contacts Zn(2+). Glutamate 330 is a catalytic residue. Zn(2+) is bound by residues histidine 333 and histidine 339. Residues 390-405 (LRTDTVSTPVSGNELL) constitute a propeptide that is removed on maturation. A Disintegrin domain is found at 397–478 (TPVSGNELLE…AGCPRNPFHA (82 aa)). Disulfide bonds link cysteine 411/cysteine 426, cysteine 413/cysteine 421, cysteine 420/cysteine 443, cysteine 434/cysteine 440, cysteine 439/cysteine 464, and cysteine 452/cysteine 471. Residues 456–458 (RGD) carry the Cell attachment site motif.

The protein belongs to the venom metalloproteinase (M12B) family. P-II subfamily. P-IIa sub-subfamily. In terms of assembly, monomer. As to expression, expressed by the venom gland.

The protein resides in the secreted. Functionally, binds alpha-5/beta-1 (ITGAV/ITGB1), alpha-V/beta-3 (ITGAV/ITGB3) and alpha-M/beta-2 (ITGAM/ITGB2) integrins. Is a potent inhibitor of platelet aggregation induced by ADP, collagen, and thrombin. Induces neutrophil chemotaxis and inhibits the chemotaxis of human neutrophils toward fMLP, IL-8, and jarastatin itself. Directly activates an integrin-coupled signaling and modulate the MAPK pathway in different ways, leading the neutrophils to express different functional response. Induces Erk-2 translocation to nucleus and a delay of the spontaneous apoptosis of neutrophils. Increases the IL-8 mRNA levels in neutrophils. When injected simultaneously with melanoma cells in mice, jarastatin, flavoridin (FL) and kistrin (KR) significantly reduce tumor lung colonization. Inhibits mouse melanoma B16F10 cell growth in vitro. When it interacts with melanoma cells, it induces actin cytoskeleton rearrangement, increasing actin polymerization and PTK2/FAK1 phosphorylation. Interferes with NF-kappaB translocation in melanoma cells. The chain is Zinc metalloproteinase/disintegrin from Bothrops jararaca (Jararaca).